A 312-amino-acid chain; its full sequence is Homoserine kinase (312 aa).

ATP is bound at residue 94-104 (PLGRGLGSSAA).

It belongs to the GHMP kinase family. Homoserine kinase subfamily.

It is found in the cytoplasm. It catalyses the reaction L-homoserine + ATP = O-phospho-L-homoserine + ADP + H(+). It participates in amino-acid biosynthesis; L-threonine biosynthesis; L-threonine from L-aspartate: step 4/5. In terms of biological role, catalyzes the ATP-dependent phosphorylation of L-homoserine to L-homoserine phosphate. The protein is Homoserine kinase of Caldanaerobacter subterraneus subsp. tengcongensis (strain DSM 15242 / JCM 11007 / NBRC 100824 / MB4) (Thermoanaerobacter tengcongensis).